A 1346-amino-acid polypeptide reads, in one-letter code: G-protein coupled receptor-associated sorting protein 1 (1346 aa).

Disordered stretches follow at residues 1-101 (MTGA…FRGE), 144-177 (TESI…RPRP), and 192-258 (ADKS…SAKT). Residues 21–36 (ENANAAEVEPEVPLVV) show a composition bias toward low complexity. Residues 211-226 (FRPRKSMKSNTRFRHM) are compositionally biased toward basic residues. Ser-295 is modified (phosphoserine). Disordered regions lie at residues 311–399 (EEAK…RPEE) and 461–485 (VSSF…SKSM). A compositionally biased stretch (basic residues) spans 316–333 (RSKPRARKGVNMRARHQA). Basic and acidic residues-rich tracts occupy residues 347–361 (DKNK…EEKA) and 370–399 (KKEP…RPEE). A compositionally biased stretch (polar residues) spans 461–484 (VSSFCLGSGKKTSMESGPKATSKS). Ser-619 and Ser-626 each carry phosphoserine. Position 860 is a phosphothreonine (Thr-860). Residue Ser-862 is modified to Phosphoserine. Positions 984–1004 (ACEPESSTEHEPDPSRRPQSW) are disordered. Residues 990 to 1003 (STEHEPDPSRRPQS) show a composition bias toward basic and acidic residues.

This sequence belongs to the GPRASP family. In terms of assembly, interacts with cytoplasmic tails of a variety of G-protein coupled receptors such as delta opioid receptor/OPRD1, beta-2 adrenergic receptor/ADRB2 and D4 dopamine receptor/DRD4. Interacts with BECN2; the interaction is direct and with D2 dopamine receptor/DRD2. Interacts with PER1. In terms of tissue distribution, expressed in the brain.

Its subcellular location is the cytoplasm. Its function is as follows. Modulates lysosomal sorting and functional down-regulation of a variety of G-protein coupled receptors. Targets receptors for degradation in lysosomes via its interaction with BECN2. This Rattus norvegicus (Rat) protein is G-protein coupled receptor-associated sorting protein 1 (Gprasp1).